Consider the following 245-residue polypeptide: Probable histone chaperone asf-1-like protein (245 aa).

Residues 157–166 (EDPVAEPVDE) are compositionally biased toward acidic residues. The disordered stretch occupies residues 157–245 (EDPVAEPVDE…SGDVEMGDKH (89 aa)). A compositionally biased stretch (basic and acidic residues) spans 167–183 (EANKVFDEDDLMPLHDD). Acidic residues predominate over residues 184–206 (GQDDDEEEEDDDETGPNTEEVDL). Basic and acidic residues predominate over residues 215 to 245 (ANAHDGTEQKNGEESMEHDGASGDVEMGDKH).

It belongs to the ASF1 family. In terms of assembly, interacts with histone H3 and histone H4.

The protein localises to the nucleus. Functionally, histone chaperone that facilitates histone deposition and histone exchange and removal during nucleosome assembly and disassembly. The chain is Probable histone chaperone asf-1-like protein (asfl-1) from Caenorhabditis elegans.